A 554-amino-acid polypeptide reads, in one-letter code: Glutamine--tRNA ligase (554 aa).

The 'HIGH' region signature appears at 33 to 43 (PEPNGYLHIGH). ATP-binding positions include 34 to 36 (EPN) and 40 to 46 (HIGHAKS). L-glutamine is bound by residues D66 and Y210. ATP-binding positions include T229, 259-260 (RL), and 267-269 (MSK). The short motif at 266–270 (VMSKR) is the 'KMSKS' region element.

Belongs to the class-I aminoacyl-tRNA synthetase family. As to quaternary structure, monomer.

It is found in the cytoplasm. The catalysed reaction is tRNA(Gln) + L-glutamine + ATP = L-glutaminyl-tRNA(Gln) + AMP + diphosphate. The chain is Glutamine--tRNA ligase from Clostridioides difficile (strain 630) (Peptoclostridium difficile).